The primary structure comprises 49 residues: Large ribosomal subunit protein bL33B (49 aa).

Belongs to the bacterial ribosomal protein bL33 family.

This is Large ribosomal subunit protein bL33B from Lactobacillus gasseri (strain ATCC 33323 / DSM 20243 / BCRC 14619 / CIP 102991 / JCM 1131 / KCTC 3163 / NCIMB 11718 / NCTC 13722 / AM63).